The sequence spans 213 residues: Uridine kinase (213 aa).

ATP is bound at residue 13-20 (GASASGKS).

This sequence belongs to the uridine kinase family.

The protein resides in the cytoplasm. It carries out the reaction uridine + ATP = UMP + ADP + H(+). The enzyme catalyses cytidine + ATP = CMP + ADP + H(+). The protein operates within pyrimidine metabolism; CTP biosynthesis via salvage pathway; CTP from cytidine: step 1/3. Its pathway is pyrimidine metabolism; UMP biosynthesis via salvage pathway; UMP from uridine: step 1/1. This is Uridine kinase from Histophilus somni (strain 129Pt) (Haemophilus somnus).